A 347-amino-acid polypeptide reads, in one-letter code: MSYEKELAAAKKAVTLAARLSQEVQKTLLQSQVWKKSDRSPVTAADYGSQAVVSLVLERELQPDKLSLVAEEETGDLRKNGSEAFLEDIAKLVKDTLASEESYTSSPLSTDDVLNAIDCGKSEGGCKGSHWVLDPIDGTRGFVRGEQYAVGLALLVEGKVVLGVMACPNLPLASAVCATDNSSQEDVGCLFFATTGSGTYVQSLKGNSLPQKVQVSSNENLDEAKFLESYHKPIPIHGTIAKKLGIKALPVRIDSQAKYAALSRGDAEIYLRFTLNGYRECIWDHAPGSIITTEAGGVVCDATGKSLDFSKGKYLAHKTGIIVTTKKLKPWILKAVRESIEEENLYF.

Aspartate 46 acts as the Proton acceptor in catalysis. The Mg(2+) site is built by glutamate 71, aspartate 134, isoleucine 136, and aspartate 137. Threonine 139 serves as the catalytic Proton acceptor. Residues threonine 139, serine 255, lysine 258, arginine 272, and aspartate 284 each contribute to the adenosine 3',5'-bisphosphate site. Positions 255, 258, 272, and 284 each coordinate AMP. Residue aspartate 284 coordinates Mg(2+).

The protein belongs to the inositol monophosphatase superfamily. Mg(2+) is required as a cofactor. Very low expression in roots, leaves, stems, flowers and siliques.

The enzyme catalyses adenosine 3',5'-bisphosphate + H2O = AMP + phosphate. The catalysed reaction is 3'-phosphoadenylyl sulfate + H2O = adenosine 5'-phosphosulfate + phosphate. It catalyses the reaction 1D-myo-inositol 1,4-bisphosphate + H2O = 1D-myo-inositol 4-phosphate + phosphate. It functions in the pathway signal transduction; phosphatidylinositol signaling pathway. Inhibited by Li(+) (IC(50)=10 mM), Na(+) (IC(50)=200 mM) and Ca(2+) (IC(50)=0.03 mM). Phosphatase that converts adenosine 3'-phosphate 5'-phosphosulfate (PAPS) to adenosine 5'-phosphosulfate (APS) and 3'-phosphoadenosine 5'-phosphate (3'-PAP) to AMP. May regulate the flux of sulfur in the sulfur-activation pathway by converting PAPS to APS. Prevents both the toxicity of PAP on RNA processing enzymes as well as the product inhibition by PAP of sulfate conjugation. Is also able to hydrolyze inositol 1,4-bisphosphate. The sequence is that of 3',5'-bisphosphate nucleotidase 2 from Arabidopsis thaliana (Mouse-ear cress).